The chain runs to 226 residues: MPLSNAQLAQTIDHTLLAPDASDAQIRELCRQAAEHRFYSVCVNSANVPLAARELAETGVLVCAVVGFPLGAGLSAAKAFEATAAIAAGAGEIDMVINLGALKSGRADDVKADIDAVHRACGTVPLKVILETGLLTDDEKVRVCEMCRDLGVAFVKTSTGFGHGGATLADVALMRRTVGPTLGVKASGGVRDRAAALAMLEAGATRLGTSSGVAIVTDQGGGAAGY.

The active-site Proton donor/acceptor is the Asp-94. Lys-156 serves as the catalytic Schiff-base intermediate with acetaldehyde. Lys-185 serves as the catalytic Proton donor/acceptor.

It belongs to the DeoC/FbaB aldolase family. DeoC type 1 subfamily.

Its subcellular location is the cytoplasm. The catalysed reaction is 2-deoxy-D-ribose 5-phosphate = D-glyceraldehyde 3-phosphate + acetaldehyde. The protein operates within carbohydrate degradation; 2-deoxy-D-ribose 1-phosphate degradation; D-glyceraldehyde 3-phosphate and acetaldehyde from 2-deoxy-alpha-D-ribose 1-phosphate: step 2/2. Functionally, catalyzes a reversible aldol reaction between acetaldehyde and D-glyceraldehyde 3-phosphate to generate 2-deoxy-D-ribose 5-phosphate. In Burkholderia orbicola (strain MC0-3), this protein is Deoxyribose-phosphate aldolase.